The chain runs to 377 residues: MKISQLAQLTQASTCPRLVVKVGSALLVGKDGEPRREWLSALVSEIAAMRAAGQEVIVVSSGAIALGARKLGLAKGGRGSLSDAQAAASVGQIALAGLWAELLAQHGLTAAQILLTLEDLEDRRRYLNVTATLGTLLAACAVPVINENDSVATQEIRFGDNDRLAARVGQAAGASGVLLLSDIDGLYDRDPRQPGATRIPVVKGVTPEIHAMATGGSSSGLGSGGMTSKLQAAEIAELAGMALAIIDGQPVAPIAAAMGAARGTLFLPRGRKQARKAWLGGRMRMRGSVQVDAGAAAALARGSSLLAAGVTEVDGDFQRGDAIAVLGPDGRTLARGLSEYDAAECARLKGRHSREHEELLGYAPRSALIHRDQMVLL.

Lysine 21 is a binding site for ATP. Residues serine 61, aspartate 149, and asparagine 161 each contribute to the substrate site. Residues 181-182 and 223-229 each bind ATP; these read SD and SGGMTSK. One can recognise a PUA domain in the interval 286 to 363; the sequence is RGSVQVDAGA…REHEELLGYA (78 aa).

Belongs to the glutamate 5-kinase family.

The protein resides in the cytoplasm. The enzyme catalyses L-glutamate + ATP = L-glutamyl 5-phosphate + ADP. It functions in the pathway amino-acid biosynthesis; L-proline biosynthesis; L-glutamate 5-semialdehyde from L-glutamate: step 1/2. Catalyzes the transfer of a phosphate group to glutamate to form L-glutamate 5-phosphate. This is Glutamate 5-kinase from Novosphingobium aromaticivorans (strain ATCC 700278 / DSM 12444 / CCUG 56034 / CIP 105152 / NBRC 16084 / F199).